The sequence spans 620 residues: Chaperone protein DnaK (620 aa).

Thr-197 is subject to Phosphothreonine; by autocatalysis. The tract at residues 597-620 (AMANKNNAEQPKKKDDDVIDAEVE) is disordered.

Belongs to the heat shock protein 70 family.

Acts as a chaperone. This chain is Chaperone protein DnaK, found in Helicobacter pylori (strain G27).